A 1465-amino-acid chain; its full sequence is DNA polymerase III PolC-type (1465 aa).

The 157-residue stretch at 427–583 (YVVFDVETTG…YDAEATGRLL (157 aa)) folds into the Exonuclease domain.

The protein belongs to the DNA polymerase type-C family. PolC subfamily.

It is found in the cytoplasm. It catalyses the reaction DNA(n) + a 2'-deoxyribonucleoside 5'-triphosphate = DNA(n+1) + diphosphate. Its function is as follows. Required for replicative DNA synthesis. This DNA polymerase also exhibits 3' to 5' exonuclease activity. The protein is DNA polymerase III PolC-type of Streptococcus pyogenes serotype M12 (strain MGAS2096).